Here is a 242-residue protein sequence, read N- to C-terminus: Protein HTATIP2 (242 aa).

Ala2 carries the post-translational modification N-acetylalanine. A required for interaction with elongation factor EEF1A1 region spans residues 2 to 25; sequence AETEALSKLREDFRMQNKSVFILG. Ser27, Gly28, Glu29, Thr30, Arg52, Arg53, Leu92, Gly93, Tyr143, Lys147, and Arg178 together coordinate NADPH. Tyr143 (proton acceptor) is an active-site residue. Lys147 is an active-site residue.

Monomer. Forms homodimers during oxidative stress. Interacts (via N-terminus) with elongation factor EEF1A1 (via middle-region); the interaction is direct and competes with EEF1A1 binding to guanyl-nucleotide exchange factor EEF1B2, thereby inhibiting GDP for GTP exchange and reactivation of EEF1A1. Interacts with nuclear transport receptors XPO4, IPO5/RANBP5, IPO7, IPO9 and KPNB1 as well as GCN1L1/GCN1 and LRPPRC probably through their HEAT repeats. Binds NCOA5/CIA.

The protein resides in the cytoplasm. In terms of biological role, represses translation by preventing reactivation of elongation factor eEF1A. May also inhibit nuclear import by competing with nuclear import substrates for binding to a subset of nuclear transport receptors. Has additionally been proposed to act as a redox sensor involved in cellular oxidative stress surveillance. In Pan paniscus (Pygmy chimpanzee), this protein is Protein HTATIP2 (HTATIP2).